The primary structure comprises 42 residues: Photosystem I reaction center subunit IX (42 aa).

The chain crosses the membrane as a helical span at residues 7–27 (YLSTAPVLAALSLGFLAGLLI).

This sequence belongs to the PsaJ family.

It localises to the plastid. Its subcellular location is the chloroplast thylakoid membrane. May help in the organization of the PsaE and PsaF subunits. The chain is Photosystem I reaction center subunit IX from Cryptomeria japonica (Japanese cedar).